A 154-amino-acid chain; its full sequence is Ribosomal RNA large subunit methyltransferase H (154 aa).

Residues Leu-76, Gly-103, and 122–127 (LSPLTL) each bind S-adenosyl-L-methionine.

The protein belongs to the RNA methyltransferase RlmH family. In terms of assembly, homodimer.

The protein resides in the cytoplasm. The enzyme catalyses pseudouridine(1915) in 23S rRNA + S-adenosyl-L-methionine = N(3)-methylpseudouridine(1915) in 23S rRNA + S-adenosyl-L-homocysteine + H(+). Its function is as follows. Specifically methylates the pseudouridine at position 1915 (m3Psi1915) in 23S rRNA. The chain is Ribosomal RNA large subunit methyltransferase H from Wolinella succinogenes (strain ATCC 29543 / DSM 1740 / CCUG 13145 / JCM 31913 / LMG 7466 / NCTC 11488 / FDC 602W) (Vibrio succinogenes).